The chain runs to 208 residues: ATP-dependent Clp protease proteolytic subunit 1 (208 aa).

Ser-108 (nucleophile) is an active-site residue. His-133 is a catalytic residue.

The protein belongs to the peptidase S14 family. Fourteen ClpP subunits assemble into 2 heptameric rings which stack back to back to give a disk-like structure with a central cavity, resembling the structure of eukaryotic proteasomes.

The protein resides in the cytoplasm. It carries out the reaction Hydrolysis of proteins to small peptides in the presence of ATP and magnesium. alpha-casein is the usual test substrate. In the absence of ATP, only oligopeptides shorter than five residues are hydrolyzed (such as succinyl-Leu-Tyr-|-NHMec, and Leu-Tyr-Leu-|-Tyr-Trp, in which cleavage of the -Tyr-|-Leu- and -Tyr-|-Trp bonds also occurs).. Its function is as follows. Cleaves peptides in various proteins in a process that requires ATP hydrolysis. Has a chymotrypsin-like activity. Plays a major role in the degradation of misfolded proteins. This Corynebacterium glutamicum (strain ATCC 13032 / DSM 20300 / JCM 1318 / BCRC 11384 / CCUG 27702 / LMG 3730 / NBRC 12168 / NCIMB 10025 / NRRL B-2784 / 534) protein is ATP-dependent Clp protease proteolytic subunit 1.